A 1070-amino-acid polypeptide reads, in one-letter code: Probable arabinosyltransferase C (1070 aa).

12 consecutive transmembrane segments (helical) span residues 10-32 (IARLLAVIAGLLGALLAMATPFL), 210-232 (LLKTIAMILGVVLTIVALVALHL), 247-269 (SRWWSIGCLDGLVITILAWWHFV), 399-421 (VATSRLLPVAVACIVGALTLFSG), 425-442 (IASIGALLVAVGPLLTIL), 449-471 (FGAVPLVAPILAASTVTAILIFR), 512-534 (SVARRFAVLALLVALSVAVAMSL), 547-564 (SRRIIGITVTSFLAMMFT), 574-596 (VFAGLAGSLGALAAVAVASAALR), 603-625 (VFAAVVLFVVALSFASVNGWWYV), 645-664 (TALLELTVIVLLLAAWFHFV), and 685-707 (SPIAIATWSLVIFEVASLTMAMI).

Belongs to the emb family.

The protein localises to the cell membrane. In terms of biological role, arabinosyl transferase responsible for the polymerization of arabinose into the arabinan of arabinogalactan. The sequence is that of Probable arabinosyltransferase C (embC) from Mycobacterium leprae (strain TN).